Here is a 378-residue protein sequence, read N- to C-terminus: Glutamate 5-kinase (378 aa).

Lys15 serves as a coordination point for ATP. Residues Ser56, Asp143, and Asn155 each coordinate substrate. Residue 175–176 (SD) coordinates ATP. A PUA domain is found at 281–358 (KGTLTIDAGA…PDVAVILGIS (78 aa)).

This sequence belongs to the glutamate 5-kinase family.

Its subcellular location is the cytoplasm. It carries out the reaction L-glutamate + ATP = L-glutamyl 5-phosphate + ADP. The protein operates within amino-acid biosynthesis; L-proline biosynthesis; L-glutamate 5-semialdehyde from L-glutamate: step 1/2. In terms of biological role, catalyzes the transfer of a phosphate group to glutamate to form L-glutamate 5-phosphate. The protein is Glutamate 5-kinase of Bradyrhizobium sp. (strain BTAi1 / ATCC BAA-1182).